A 222-amino-acid chain; its full sequence is S-crystallin SL20-1 (222 aa).

Residues 2-80 (PNYTLYYFNG…YLARENGYYG (79 aa)) form the GST N-terminal domain. In terms of domain architecture, GST C-terminal spans 82–222 (NNMDMFRIDY…YLKKRNNTNW (141 aa)).

It belongs to the GST superfamily. Lens.

Functionally, S-crystallins are structural components of squids and octopi eye lens. Contains relatively little if any GST activity. In Nototodarus sloanii (Wellington flying squid), this protein is S-crystallin SL20-1.